The following is a 224-amino-acid chain: MLNKLYDWVDERLDITPLWRDIADHEVPEHVNPAHHFSAFVYCFGGLTFFVTVIQILSGMFLTMYYVPDIKNAWESVYYLQNEVAFGQIVRGMHHWGASLVIVMMFLHTLRVFFQGAYKKPREMNWIVGVLIFMVMMGLGFTGYLLPWDMKALFATKVGLQIAEAVPLIGPAIKTLLAGDPEIVGAQTLARFFAIHVFFLPAALLGLMAAHFLMIRRQGISGPL.

The chain crosses the membrane as a helical span at residues 37-57 (FSAFVYCFGGLTFFVTVIQIL). Heme b is bound at residue Y42. C43 lines the heme c pocket. Heme b-binding residues include R91, H94, H108, and R111. 3 helical membrane-spanning segments follow: residues 96–116 (WGAS…FFQG), 126–146 (WIVG…GYLL), and 195–215 (IHVF…FLMI). 2 residues coordinate heme b: H196 and H211. The heme c site is built by R216 and I220. Residue S221 participates in heme b binding.

Belongs to the cytochrome b family. In terms of assembly, the main subunits of the menaquinol:cytochrome c complex are a Rieske-type iron-sulfur protein (QcrA), a cytochrome b (QcrB) and a cytochrome c (QcrC). It depends on heme b as a cofactor. Heme c serves as cofactor.

The protein resides in the cell membrane. Functionally, component of the menaquinol:cytochrome c reductase complex. In Geobacillus thermodenitrificans, this protein is Menaquinol:cytochrome c reductase cytochrome b subunit (qcrB).